Reading from the N-terminus, the 99-residue chain is uncharacterized protein (99 aa).

The signal sequence occupies residues 1–17; the sequence is MMMNAFFPAMALMVLVG. A lipid anchor (N-palmitoyl cysteine) is attached at Cys18. Cys18 carries S-diacylglycerol cysteine lipidation.

It is found in the cell membrane. This is an uncharacterized protein from Shigella boydii serotype 4 (strain Sb227).